A 238-amino-acid chain; its full sequence is tRNA (guanine-N(7)-)-methyltransferase (238 aa).

Positions 62, 87, 119, and 141 each coordinate S-adenosyl-L-methionine. The active site involves Asp-141. Substrate-binding positions include Lys-145, Asp-177, and Thr-216–Glu-219.

The protein belongs to the class I-like SAM-binding methyltransferase superfamily. TrmB family.

The enzyme catalyses guanosine(46) in tRNA + S-adenosyl-L-methionine = N(7)-methylguanosine(46) in tRNA + S-adenosyl-L-homocysteine. The protein operates within tRNA modification; N(7)-methylguanine-tRNA biosynthesis. Catalyzes the formation of N(7)-methylguanine at position 46 (m7G46) in tRNA. The sequence is that of tRNA (guanine-N(7)-)-methyltransferase from Novosphingobium aromaticivorans (strain ATCC 700278 / DSM 12444 / CCUG 56034 / CIP 105152 / NBRC 16084 / F199).